A 506-amino-acid chain; its full sequence is Glutamate--tRNA ligase (506 aa).

Positions Pro24–Leu34 match the 'HIGH' region motif. Residues Thr124–Asp147 form a disordered region. Residues Val128–Asp147 are compositionally biased toward basic and acidic residues. A 'KMSKS' region motif is present at residues Lys268–Arg272. Lys271 contributes to the ATP binding site.

This sequence belongs to the class-I aminoacyl-tRNA synthetase family. Glutamate--tRNA ligase type 1 subfamily. Monomer.

Its subcellular location is the cytoplasm. The enzyme catalyses tRNA(Glu) + L-glutamate + ATP = L-glutamyl-tRNA(Glu) + AMP + diphosphate. In terms of biological role, catalyzes the attachment of glutamate to tRNA(Glu) in a two-step reaction: glutamate is first activated by ATP to form Glu-AMP and then transferred to the acceptor end of tRNA(Glu). This is Glutamate--tRNA ligase from Kocuria rhizophila (strain ATCC 9341 / DSM 348 / NBRC 103217 / DC2201).